The chain runs to 371 residues: ADP-ribosylarginine hydrolase Tri1 (371 aa).

Residues 1–61 (MIDLRSPNAL…LQSRACTLTP (61 aa)) are N-terminal extension. The ADP-ribosyl hydrolase domain stretch occupies residues 70-362 (GALLGLAIGD…LFDRAPQVDE (293 aa)). Positions 112, 113, 114, 157, and 313 each coordinate Mg(2+).

The protein belongs to the ADP-ribosylglycohydrolase family. Requires Mg(2+) as cofactor.

It catalyses the reaction N(omega)-(ADP-D-ribosyl)-L-arginyl-[protein] + H2O = ADP-D-ribose + L-arginyl-[protein]. Functionally, immunity component of an interbacterial competition system (also called effector-immunity systems). Expression in E.coli neutralizes the toxic effects of non-cognate S.proteamaculans effector protein Tre1 (Tre1-Sp); cannot be co-purified with Tre1-Sp from E.coli, suggesting they do not form a stable complex. Probably acts as an arginine mono-ADP-ribosylhydrolase, mediating the removal of mono-ADP-ribose attached to arginine residues on proteins. Probably de-ADP-ribosylates FtsZ and possibly other proteins; the ability to hydrolyze ADP-ribosyl moieties is not essential for neutralization of its cognate toxin, strongly suggesting its N-terminal extension occludes the active site of cognate toxin Tre1. This is ADP-ribosylarginine hydrolase Tri1 from Pseudomonas putida (strain GB-1).